The primary structure comprises 177 residues: Adenylyl-sulfate kinase (177 aa).

12 to 19 contributes to the ATP binding site; the sequence is GLSGAGKT. Ser-86 acts as the Phosphoserine intermediate in catalysis.

The protein belongs to the APS kinase family.

The enzyme catalyses adenosine 5'-phosphosulfate + ATP = 3'-phosphoadenylyl sulfate + ADP + H(+). Its pathway is sulfur metabolism; hydrogen sulfide biosynthesis; sulfite from sulfate: step 2/3. Catalyzes the synthesis of activated sulfate. The chain is Adenylyl-sulfate kinase from Picosynechococcus sp. (strain ATCC 27264 / PCC 7002 / PR-6) (Agmenellum quadruplicatum).